Reading from the N-terminus, the 316-residue chain is Ribosomal RNA small subunit methyltransferase H (316 aa).

Residues 35–37 (GGH), Asp55, Phe79, Asp101, and Gln108 contribute to the S-adenosyl-L-methionine site. Residues 291–316 (ALKPSDQEVELNPRSRSSVLRVAEKL) are disordered.

This sequence belongs to the methyltransferase superfamily. RsmH family.

The protein localises to the cytoplasm. The enzyme catalyses cytidine(1402) in 16S rRNA + S-adenosyl-L-methionine = N(4)-methylcytidine(1402) in 16S rRNA + S-adenosyl-L-homocysteine + H(+). Its function is as follows. Specifically methylates the N4 position of cytidine in position 1402 (C1402) of 16S rRNA. In Vibrio cholerae serotype O1 (strain ATCC 39315 / El Tor Inaba N16961), this protein is Ribosomal RNA small subunit methyltransferase H.